A 302-amino-acid chain; its full sequence is Uricase (302 aa).

Ser2 is modified (N-acetylserine). Residues Lys11 and Thr58 each act as charge relay system in the active site. 5-hydroxyisourate-binding residues include Thr58, Asp59, Phe160, Arg177, Val228, Gln229, and Asn255. Thr58 is an O2 binding site. Residues Thr58, Asp59, Phe160, Arg177, Val228, Gln229, and Asn255 each coordinate urate. An O2-binding site is contributed by Asn255. His257 (charge relay system) is an active-site residue. Residues 300-302 carry the Microbody targeting signal motif; that stretch reads SKL.

It belongs to the uricase family. As to quaternary structure, homotetramer.

Its subcellular location is the peroxisome. The catalysed reaction is urate + O2 + H2O = 5-hydroxyisourate + H2O2. It functions in the pathway purine metabolism; urate degradation; (S)-allantoin from urate: step 1/3. 8-Azaxanthine is one of the most potent competitive inhibitors of uricase activity. Hypoxanthine has only a small inhibitor effect, and caffeine has no effect at all. Azide not only competes with dioxygen but also competes with the substrate for its enzymatic site. Its function is as follows. Urate oxidase is a cofactorless enzyme involved in the metabolism of purines. Catalyzes, in the presence of molecular oxygen, the hydroxylation of uric acid to metastable 5-hydroxyisourate (5-HIU) which is further degraded to allantoin. In Aspergillus flavus, this protein is Uricase.